We begin with the raw amino-acid sequence, 157 residues long: Probable Brix domain-containing ribosomal biogenesis protein (157 aa).

One can recognise a Brix domain in the interval 1–157 (MLVTTSRKPS…KFNIKGFKKY (157 aa)).

Functionally, probably involved in the biogenesis of the ribosome. In Methanosarcina mazei (strain ATCC BAA-159 / DSM 3647 / Goe1 / Go1 / JCM 11833 / OCM 88) (Methanosarcina frisia), this protein is Probable Brix domain-containing ribosomal biogenesis protein.